The following is a 236-amino-acid chain: Auxin-responsive protein IAA13 (236 aa).

3 disordered regions span residues 1–24 (MAGADVDVGTELRLGLPGGGGGAA), 52–93 (EAAA…WPPV), and 105–130 (SVKSKKEEEADKQQQQPAANASGSNS). The short motif at 12–16 (LRLGL) is the EAR-like (transcriptional repression) element. Positions 52-61 (EAAAGKAEAP) are enriched in low complexity. A compositionally biased stretch (basic and acidic residues) spans 62–81 (AAEKAKRPAEAAAADAEKPP). The segment covering 117-130 (QQQQPAANASGSNS) has biased composition (low complexity). A PB1 domain is found at 131-218 (SAFVKVSMDG…SCKRLRIMKG (88 aa)).

This sequence belongs to the Aux/IAA family. As to quaternary structure, homodimers and heterodimers.

Its subcellular location is the nucleus. Its function is as follows. Aux/IAA proteins are short-lived transcriptional factors that function as repressors of early auxin response genes at low auxin concentrations. The protein is Auxin-responsive protein IAA13 (IAA13) of Oryza sativa subsp. japonica (Rice).